Consider the following 215-residue polypeptide: Na(+)-translocating NADH-quinone reductase subunit D (215 aa).

6 helical membrane passes run 14 to 34 (PFIS…ALAV), 42 to 62 (FVMA…ISLI), 72 to 92 (IIVQ…LLKA), 103 to 123 (VFVG…AYAM), 131 to 151 (FLDG…VGTI), and 178 to 198 (NGML…IWVL).

It belongs to the NqrDE/RnfAE family. As to quaternary structure, composed of six subunits; NqrA, NqrB, NqrC, NqrD, NqrE and NqrF.

The protein localises to the cell inner membrane. It carries out the reaction a ubiquinone + n Na(+)(in) + NADH + H(+) = a ubiquinol + n Na(+)(out) + NAD(+). In terms of biological role, NQR complex catalyzes the reduction of ubiquinone-1 to ubiquinol by two successive reactions, coupled with the transport of Na(+) ions from the cytoplasm to the periplasm. NqrA to NqrE are probably involved in the second step, the conversion of ubisemiquinone to ubiquinol. In Tolumonas auensis (strain DSM 9187 / NBRC 110442 / TA 4), this protein is Na(+)-translocating NADH-quinone reductase subunit D.